The primary structure comprises 262 residues: Insulin-like growth factor-binding protein 1 (262 aa).

Positions 1–25 are cleaved as a signal peptide; sequence MPEVPAVRAWPLLLSLALQLGAAAG. The IGFBP N-terminal domain occupies 28–108; the sequence is QPLHCAPCSA…TRGQGACMPA (81 aa). Intrachain disulfides connect cysteine 32-cysteine 59, cysteine 35-cysteine 61, cysteine 43-cysteine 62, cysteine 50-cysteine 65, cysteine 72-cysteine 85, and cysteine 79-cysteine 105. The segment at 101–133 is disordered; sequence GQGACMPAPSAEATETKDPAAPETTSPESTEMT. Low complexity predominate over residues 121–131; that stretch reads APETTSPESTE. Residues serine 126, serine 129, and serine 147 each carry the phosphoserine modification. Position 161 is a phosphotyrosine (tyrosine 161). In terms of domain architecture, Thyroglobulin type-1 spans 176–254; the sequence is KEPCQRELYK…STAVRGDPKC (79 aa). Intrachain disulfides connect cysteine 179-cysteine 209, cysteine 220-cysteine 231, and cysteine 233-cysteine 254. The residue at position 245 (serine 245) is a Phosphoserine. The Cell attachment site motif lies at 249 to 251; sequence RGD.

Binds equally well IGF1 and IGF2. Interacts with integrin ITGA5:ITGB1. Interacts with VHL; this interaction inhibits HIF1A degradation.

The protein resides in the secreted. Multifunctional protein that plays a critical role in regulating the availability of IGFs such as IGF1 and IGF2 to their receptors and thereby regulates IGF-mediated cellular processes including cell migration, proliferation, differentiation or apoptosis in a cell-type specific manner. Also plays a positive role in cell migration by interacting with integrin ITGA5:ITGB1 through its RGD motif. Mechanistically, binding to integrins leads to activation of focal adhesion kinase/PTK2 and stimulation of the mitogen-activated protein kinase (MAPK) pathway. Regulates cardiomyocyte apoptosis by suppressing HIF-1alpha/HIF1A degradation through ubiquitination. This is Insulin-like growth factor-binding protein 1 (IGFBP1) from Sus scrofa (Pig).